The chain runs to 495 residues: Protein SLENDER RICE1-LIKE 1 (495 aa).

The 373-residue stretch at 77 to 449 (EEEEVAGIRL…RPLFSASAWE (373 aa)) folds into the GRAS domain. The tract at residues 84 to 140 (IRLVHLLMSCAGAIEAGDHALASAQLADSHAALAAVSAASGIGRVAVHFTTALSRRL) is leucine repeat I (LRI). A VHIID region spans residues 158-223 (YHHFYEACPY…GGPPFLRITG (66 aa)). The VHIID motif lies at 189–193 (VHVID). Residues 237–269 (DVGLRLADLARSVRVRFSFRGVAANSLDEVRPW) form a leucine repeat II (LRII) region. Residues 279–371 (VAFNSVLQLH…EAYLQREICD (93 aa)) are PFYRE. The LXXLL motif motif lies at 287 to 291 (LHRLL). The segment at 374–449 (CGEGAARRER…RPLFSASAWE (76 aa)) is SAW. The tract at residues 451 to 495 (AGDGGGDNNNNSNSNVSGSSGSDSNNSGSSNGKSSGARDGSSVCL) is disordered. Residues 458-485 (NNNNSNSNVSGSSGSDSNNSGSSNGKSS) are compositionally biased toward low complexity.

This sequence belongs to the GRAS family. Expressed in elongating internodes and flowers. Expressed in floral meristem, stamen primordia and tapetum in developing anthers. Expressed at low levels in roots, shoot apices and rachis.

It is found in the nucleus. Functionally, probable transcriptional regulator that acts as a repressor of the gibberellin (GA) signaling pathway. Its repressive activity is weaker than that of SLR1. Its overexpression prevents the GA signaling pathway and induces a dwarf phenotype. This Oryza sativa subsp. japonica (Rice) protein is Protein SLENDER RICE1-LIKE 1.